The primary structure comprises 959 residues: Translation initiation factor IF-2 (959 aa).

A compositionally biased stretch (basic and acidic residues) spans 1-10 (MSDKTNDDKT). Positions 1-374 (MSDKTNDDKT…SQMQETREKI (374 aa)) are disordered. Residues 27–37 (EQSTVRQNFSH) are compositionally biased toward polar residues. Composition is skewed to low complexity over residues 63 to 118 (AAAA…VTKP) and 128 to 138 (QRPGGQQAQRP). 2 stretches are compositionally biased toward basic and acidic residues: residues 154–225 (SEMD…EAAK) and 232–241 (ARSERRDDAR). A compositionally biased stretch (low complexity) spans 246–284 (GARPQQAGRPQGGRPQPAGRPQQGSPRPAPIIADAAPIA). Basic and acidic residues predominate over residues 318-333 (PEVRAPKVVKGEDDRR). The 170-residue stretch at 457–626 (SRPPVVTIMG…LLQAEMLDLK (170 aa)) folds into the tr-type G domain. Residues 466-473 (GHVDHGKT) form a G1 region. Residue 466–473 (GHVDHGKT) coordinates GTP. The G2 stretch occupies residues 491–495 (GITQH). The interval 512–515 (DTPG) is G3. GTP-binding positions include 512 to 516 (DTPGH) and 566 to 569 (NKID). Residues 566–569 (NKID) are G4. A G5 region spans residues 602-604 (SAK).

It belongs to the TRAFAC class translation factor GTPase superfamily. Classic translation factor GTPase family. IF-2 subfamily.

It is found in the cytoplasm. Its function is as follows. One of the essential components for the initiation of protein synthesis. Protects formylmethionyl-tRNA from spontaneous hydrolysis and promotes its binding to the 30S ribosomal subunits. Also involved in the hydrolysis of GTP during the formation of the 70S ribosomal complex. This Brucella ovis (strain ATCC 25840 / 63/290 / NCTC 10512) protein is Translation initiation factor IF-2.